We begin with the raw amino-acid sequence, 176 residues long: MKNIAKKDLFINNEIRVREVRLIGLDGEQLGIKPLAQAQAIADDANVDLVLIQPQATPPVARIMDYGKFKFEYQKKQKEQRKKQSVVTIKEVRLSPVIDKGDFETKLRNGRKFLEKGNKVKVSIRFKGRMITHKEIGAKVLADFAEATQDIAIIEQRAKMDGRQMFMQLAPIPDKK.

This sequence belongs to the IF-3 family. In terms of assembly, monomer.

It localises to the cytoplasm. In terms of biological role, IF-3 binds to the 30S ribosomal subunit and shifts the equilibrium between 70S ribosomes and their 50S and 30S subunits in favor of the free subunits, thus enhancing the availability of 30S subunits on which protein synthesis initiation begins. In Streptococcus mutans serotype c (strain ATCC 700610 / UA159), this protein is Translation initiation factor IF-3.